We begin with the raw amino-acid sequence, 429 residues long: Phosphoribosylamine--glycine ligase (429 aa).

One can recognise an ATP-grasp domain in the interval 109–316 (KDFLARHQIP…LVDLCLAAID (208 aa)). 135 to 196 (VREQGAPIVV…EEFLDGEEAS (62 aa)) lines the ATP pocket. The interval 212–235 (SQDHKRVGDKDTGPNTGGMGAYSP) is disordered. Basic and acidic residues predominate over residues 213–223 (QDHKRVGDKDT). Positions 286 and 288 each coordinate Mg(2+).

This sequence belongs to the GARS family. Mg(2+) serves as cofactor. Requires Mn(2+) as cofactor.

It catalyses the reaction 5-phospho-beta-D-ribosylamine + glycine + ATP = N(1)-(5-phospho-beta-D-ribosyl)glycinamide + ADP + phosphate + H(+). The protein operates within purine metabolism; IMP biosynthesis via de novo pathway; N(1)-(5-phospho-D-ribosyl)glycinamide from 5-phospho-alpha-D-ribose 1-diphosphate: step 2/2. The polypeptide is Phosphoribosylamine--glycine ligase (Vibrio parahaemolyticus serotype O3:K6 (strain RIMD 2210633)).